The following is a 214-amino-acid chain: MLDREGFRPNVGIILLNARNEVFWGKRLREHSWQFPQGGIKYGETPMQAMYRELHEETGLHPEHVKIIGRTRDWLRYEVPDKFIKREVRGHYRGQKQIWFLLRMVGRDCDICLRATDHPEFDAWRWNEYWVPLDAVIEFKRDVYQLALTELSRFLRRPAQRAEKPRGPRMSRYPRVIGAQAQTLTIVDTSVVCSEIEVEASTLDEMPPHVIVGK.

Residues Gly6–Thr149 enclose the Nudix hydrolase domain. Positions Gly38 to Gly59 match the Nudix box motif.

The protein belongs to the Nudix hydrolase family. RppH subfamily. The cofactor is a divalent metal cation.

Accelerates the degradation of transcripts by removing pyrophosphate from the 5'-end of triphosphorylated RNA, leading to a more labile monophosphorylated state that can stimulate subsequent ribonuclease cleavage. This is RNA pyrophosphohydrolase from Burkholderia orbicola (strain MC0-3).